The following is a 307-amino-acid chain: Small ribosomal subunit protein uS5m (307 aa).

The transit peptide at 1-13 (MFKRQLSTSVRYL) directs the protein to the mitochondrion. The S5 DRBM domain maps to 144 to 208 (LTMKPLVMKR…WDAVRNLKEI (65 aa)).

The protein belongs to the universal ribosomal protein uS5 family. In terms of assembly, component of the mitochondrial small ribosomal subunit (mt-SSU). Mature yeast 74S mitochondrial ribosomes consist of a small (37S) and a large (54S) subunit. The 37S small subunit contains a 15S ribosomal RNA (15S mt-rRNA) and 34 different proteins. The 54S large subunit contains a 21S rRNA (21S mt-rRNA) and 46 different proteins. uS3m, uS4m and uS5m form the narrow entry site of the mRNA channel.

It is found in the mitochondrion. Component of the mitochondrial ribosome (mitoribosome), a dedicated translation machinery responsible for the synthesis of mitochondrial genome-encoded proteins, including at least some of the essential transmembrane subunits of the mitochondrial respiratory chain. The mitoribosomes are attached to the mitochondrial inner membrane and translation products are cotranslationally integrated into the membrane. The polypeptide is Small ribosomal subunit protein uS5m (MRPS5) (Saccharomyces cerevisiae (strain ATCC 204508 / S288c) (Baker's yeast)).